We begin with the raw amino-acid sequence, 63 residues long: Small ribosomal subunit protein eS17 (63 aa).

The protein belongs to the eukaryotic ribosomal protein eS17 family.

The protein is Small ribosomal subunit protein eS17 of Methanococcus vannielii (strain ATCC 35089 / DSM 1224 / JCM 13029 / OCM 148 / SB).